Reading from the N-terminus, the 778-residue chain is Double zinc ribbon and ankyrin repeat-containing protein 1 (778 aa).

Residues serine 179 and serine 201 each carry the phosphoserine modification. 2 DZANK-type zinc fingers span residues 230–289 (CAHC…CVVC) and 359–407 (CSRC…GSCG). 2 ANK repeats span residues 631 to 662 (ENKL…DPNC) and 666 to 695 (QGRP…DIDQ). Serine 768 carries the post-translational modification Phosphoserine.

In terms of assembly, interacts with NINL. Associates with DYNC1H1 and multiple dynein intermediate and light chains as well as actin-binding proteins.

It localises to the cytoplasm. The protein resides in the cytoskeleton. It is found in the microtubule organizing center. Its subcellular location is the centrosome. The protein localises to the cilium basal body. In terms of biological role, involved in vesicle transport in photoreceptor cells. This is Double zinc ribbon and ankyrin repeat-containing protein 1 (Dzank1) from Mus musculus (Mouse).